A 500-amino-acid polypeptide reads, in one-letter code: Glycerol kinase (500 aa).

ADP is bound at residue Thr11. Thr11, Thr12, and Ser13 together coordinate ATP. Thr11 contributes to the sn-glycerol 3-phosphate binding site. Arg15 is a binding site for ADP. Residues Arg81, Glu82, Tyr133, and Asp242 each contribute to the sn-glycerol 3-phosphate site. The glycerol site is built by Arg81, Glu82, Tyr133, Asp242, and Gln243. Positions 264 and 307 each coordinate ADP. Positions 264, 307, 311, and 411 each coordinate ATP. ADP is bound at residue Gly411.

This sequence belongs to the FGGY kinase family.

The enzyme catalyses glycerol + ATP = sn-glycerol 3-phosphate + ADP + H(+). It participates in polyol metabolism; glycerol degradation via glycerol kinase pathway; sn-glycerol 3-phosphate from glycerol: step 1/1. With respect to regulation, inhibited by fructose 1,6-bisphosphate (FBP). Functionally, key enzyme in the regulation of glycerol uptake and metabolism. Catalyzes the phosphorylation of glycerol to yield sn-glycerol 3-phosphate. The polypeptide is Glycerol kinase (Rhodopseudomonas palustris (strain ATCC BAA-98 / CGA009)).